The primary structure comprises 172 residues: Protein-export protein SecB (172 aa).

Positions 152-172 are disordered; the sequence is AQGAEGGNSGIVMPDGSQARH.

It belongs to the SecB family. Homotetramer, a dimer of dimers. One homotetramer interacts with 1 SecA dimer.

The protein localises to the cytoplasm. Functionally, one of the proteins required for the normal export of preproteins out of the cell cytoplasm. It is a molecular chaperone that binds to a subset of precursor proteins, maintaining them in a translocation-competent state. It also specifically binds to its receptor SecA. The polypeptide is Protein-export protein SecB (Cupriavidus taiwanensis (strain DSM 17343 / BCRC 17206 / CCUG 44338 / CIP 107171 / LMG 19424 / R1) (Ralstonia taiwanensis (strain LMG 19424))).